Consider the following 118-residue polypeptide: Small ribosomal subunit protein uS13 (118 aa).

The segment at 94–118 (GLPLRGQRTRTNARTRKGPRKAIRK) is disordered.

It belongs to the universal ribosomal protein uS13 family. As to quaternary structure, part of the 30S ribosomal subunit. Forms a loose heterodimer with protein S19. Forms two bridges to the 50S subunit in the 70S ribosome.

Functionally, located at the top of the head of the 30S subunit, it contacts several helices of the 16S rRNA. In the 70S ribosome it contacts the 23S rRNA (bridge B1a) and protein L5 of the 50S subunit (bridge B1b), connecting the 2 subunits; these bridges are implicated in subunit movement. Contacts the tRNAs in the A and P-sites. The sequence is that of Small ribosomal subunit protein uS13 from Stenotrophomonas maltophilia (strain R551-3).